Here is a 177-residue protein sequence, read N- to C-terminus: Large ribosomal subunit protein uL6 (177 aa).

This sequence belongs to the universal ribosomal protein uL6 family. In terms of assembly, part of the 50S ribosomal subunit.

Functionally, this protein binds to the 23S rRNA, and is important in its secondary structure. It is located near the subunit interface in the base of the L7/L12 stalk, and near the tRNA binding site of the peptidyltransferase center. The polypeptide is Large ribosomal subunit protein uL6 (Polynucleobacter asymbioticus (strain DSM 18221 / CIP 109841 / QLW-P1DMWA-1) (Polynucleobacter necessarius subsp. asymbioticus)).